Reading from the N-terminus, the 853-residue chain is Trimethylguanosine synthase (853 aa).

Residues 53–80 are disordered; that stretch reads NNSGDQATEEEEGGYSCGTAESHDSKGI. A Phosphoserine modification is found at Ser55. Thr60 carries the post-translational modification Phosphothreonine. Phosphoserine occurs at positions 85, 89, 96, and 141. Position 146 is a phosphotyrosine (Tyr146). The segment at 149–187 is disordered; the sequence is DDILASDDPSSIEQYENTRTYELQSKKDTETENPPVENT. Phosphoserine is present on Ser154. Residues 156–171 show a composition bias toward polar residues; sequence DPSSIEQYENTRTYEL. The residue at position 189 (Ser189) is a Phosphoserine. 2 disordered regions span residues 334 to 461 and 527 to 632; these read SQLD…GGIP and DEEA…KKVN. Residues 367–382 are compositionally biased toward low complexity; it reads NGGTNEESNSSGNTNT. Ser412, Ser438, and Ser578 each carry phosphoserine. Positions 431 to 442 are enriched in acidic residues; that stretch reads DIDENPASDFDD. The span at 564–578 shows a compositional bias: polar residues; it reads ETNNPEPEKCQSVSS. Residues 608-619 show a composition bias toward basic and acidic residues; the sequence is PDSRQAETEAEV. Residues 620–630 are compositionally biased toward basic residues; it reads KKKKNKKKNKK. The sufficient for catalytic activity stretch occupies residues 631–846; sequence VNGLPPEIAA…TITAYFGDLI (216 aa). S-adenosyl-L-methionine is bound at residue Asp719. A N(7)-methylguanosine-binding site is contributed by Trp766.

The protein belongs to the methyltransferase superfamily. Trimethylguanosine synthase family. In terms of assembly, may form homooligomers. Interacts with CREBBP/CBP, EED/WAIT1, EP300/P300, NCOA6/PRIP, PPARBP/PBP and SMN. Ubiquitously expressed. High expression in heart, skeletal muscle, kidney, liver and placenta.

The protein localises to the cytoplasm. It is found in the nucleus. It localises to the cajal body. The protein resides in the nucleolus. The catalysed reaction is a 5'-end (N(7)-methyl 5'-triphosphoguanosine)-ribonucleoside in snRNA + S-adenosyl-L-methionine = a 5'-end (N(2),N(7)-dimethyl 5'-triphosphoguanosine)-ribonucleoside in snRNA + S-adenosyl-L-homocysteine + H(+). It carries out the reaction a 5'-end (N(7)-methyl 5'-triphosphoguanosine)-ribonucleoside in snoRNA + S-adenosyl-L-methionine = a 5'-end (N(2),N(7)-dimethyl 5'-triphosphoguanosine)-ribonucleoside in snoRNA + S-adenosyl-L-homocysteine + H(+). The enzyme catalyses a 5'-end (N(2),N(7)-dimethyl 5'-triphosphoguanosine)-ribonucleoside in snRNA + S-adenosyl-L-methionine = a 5'-end (N(2),N(2),N(7)-trimethyl 5'-triphosphoguanosine)-ribonucleoside in snRNA + S-adenosyl-L-homocysteine + H(+). It catalyses the reaction a 5'-end (N(2),N(7)-dimethyl 5'-triphosphoguanosine)-ribonucleoside in snoRNA + S-adenosyl-L-methionine = a 5'-end (N(2),N(2),N(7)-trimethyl 5'-triphosphoguanosine)-ribonucleoside in snoRNA + S-adenosyl-L-homocysteine + H(+). In terms of biological role, catalyzes the 2 serial methylation steps for the conversion of the 7-monomethylguanosine (m(7)G) caps of snRNAs and snoRNAs to a 2,2,7-trimethylguanosine (m(2,2,7)G) cap structure. The enzyme is specific for guanine, and N7 methylation must precede N2 methylation. Hypermethylation of the m7G cap of U snRNAs leads to their concentration in nuclear foci, their colocalization with coilin and the formation of canonical Cajal bodies (CBs). Plays a role in transcriptional regulation. In Homo sapiens (Human), this protein is Trimethylguanosine synthase (TGS1).